Here is a 97-residue protein sequence, read N- to C-terminus: Co-chaperonin GroES (97 aa).

It belongs to the GroES chaperonin family. In terms of assembly, heptamer of 7 subunits arranged in a ring. Interacts with the chaperonin GroEL.

The protein localises to the cytoplasm. Together with the chaperonin GroEL, plays an essential role in assisting protein folding. The GroEL-GroES system forms a nano-cage that allows encapsulation of the non-native substrate proteins and provides a physical environment optimized to promote and accelerate protein folding. GroES binds to the apical surface of the GroEL ring, thereby capping the opening of the GroEL channel. This is Co-chaperonin GroES from Yersinia enterocolitica.